A 91-amino-acid polypeptide reads, in one-letter code: Small ribosomal subunit protein bS20 (91 aa).

Residues 1 to 25 (MANSPSAKKRAKQAEKRRSHNASLR) are disordered. Residues 7–20 (AKKRAKQAEKRRSH) show a composition bias toward basic residues.

This sequence belongs to the bacterial ribosomal protein bS20 family.

Functionally, binds directly to 16S ribosomal RNA. This chain is Small ribosomal subunit protein bS20, found in Azotobacter vinelandii (strain DJ / ATCC BAA-1303).